Reading from the N-terminus, the 321-residue chain is Sideroflexin-1-3 (321 aa).

5 consecutive transmembrane segments (helical) span residues 101 to 121, 146 to 168, 174 to 194, 220 to 240, and 266 to 286; these read IITGGMMAFYKSTPAVVFWQW, LVTSYCLATSGALVTALSLNHAV, LLGRLVPLVAVGAANCINIPC, AAVVGISTVILSRIAMAIPGM, and IQTLFCGFVLIFATPLGCAFF.

This sequence belongs to the sideroflexin family.

It localises to the mitochondrion membrane. Functionally, mitochondrial amino-acid transporter that mediates transport of serine into mitochondria. This is Sideroflexin-1-3 from Drosophila melanogaster (Fruit fly).